A 441-amino-acid polypeptide reads, in one-letter code: Heat shock factor protein 4 (441 aa).

A DNA-binding region spans residues 17–121; sequence NVPAFLTKLW…EHLLEHIKRK (105 aa). Residues 130–205 are hydrophobic repeat HR-A/B; sequence TKVRQEDLSK…QMQSNSPSTV (76 aa).

It belongs to the HSF family. As to expression, predominantly expressed in the eye.

It is found in the nucleus. Heat-shock transcription factor that specifically binds heat shock promoter elements (HSE). Required for denucleation and organelle rupture and degradation that occur during eye lens terminal differentiation, when fiber cells that compose the lens degrade all membrane-bound organelles in order to provide lens with transparency to allow the passage of light. In this process, may regulate denucleation of lens fiber cells in part by activating dnase1l1l and dnase2b transcription. May be involved in DNA repair through the transcriptional regulation of rad51. May up-regulate TP53 protein in lens fiber cells, possibly through protein stabilization. In the eye lens, controls the expression of alpha-crystallin B chain/CRYAB and consequently may be involved in the regulation of lysosomal acidification. The chain is Heat shock factor protein 4 from Danio rerio (Zebrafish).